The sequence spans 420 residues: MGEEEENPNSIDILPELLEEVLLRLPTKSILKCRIVSKQWRSLLESSRFAERHMSLQNSRRRILAAYNCDCGGRRKLLPESRFEGDEEIVYLHCDASRPSMTCQGVICFPEQDWIIVLNPSTSQLRRFPSGLNHNCRFRIGLWKTFSPGNWVMGFGRDKVNGRYKVVRMSFAFWRVRQEEPVVECGVLDVDTGEWRKLSPPPYVVNVGSKSVCVNGSIYWLHIQTVYRILALDLHKEEFHKVPVPPTQITVDTQMVNLEDRLVLAITRVSPEWILEVWGMDTYKEKWSKTYSISLDHRVVSWRRQKRWFTPVAVSKQANLVFYDNKKRLFKYYPVKDEIRCLSLDICVLSPYVENLVPLPLKPSHPHPTPKNSDFEMRISRCRLFSTPGSWISKILKWNVMTLEILFTSLAIVGYICLPL.

An F-box domain is found at 7–53 (NPNSIDILPELLEEVLLRLPTKSILKCRIVSKQWRSLLESSRFAERH). 2 LRR repeats span residues 112-135 (QDWI…LNHN) and 226-251 (VYRI…QITV).

The polypeptide is F-box/LRR-repeat protein At2g43260 (Arabidopsis thaliana (Mouse-ear cress)).